The following is a 582-amino-acid chain: Hydrogen peroxide stress regulator 1 (582 aa).

Disordered stretches follow at residues 24–55 (SPFA…HNSS), 107–154 (YPSA…GISK), 347–366 (TSYN…SGET), and 375–422 (NTSG…GGKS). The segment covering 107–125 (YPSASFSTSQHPSQVYNDG) has biased composition (polar residues). Residues 126–143 (STLNSNNTTQQLNNNNGF) show a composition bias toward low complexity. A compositionally biased stretch (polar residues) spans 375–392 (NTSGRSPNSMEATEQIGT). The C2H2-type 1 zinc finger occupies 423-446 (FVCPECSKKFKRSEHLRRHIRSLH). The C2H2-type 2; atypical zinc-finger motif lies at 452 to 473 (FVCICGKRFSRRDNLRQHERLH).

The protein resides in the nucleus. Its function is as follows. Transcription factor that globally supports gene expression in response to hydrogen peroxide. In Schizosaccharomyces pombe (strain 972 / ATCC 24843) (Fission yeast), this protein is Hydrogen peroxide stress regulator 1 (hsr1).